A 273-amino-acid chain; its full sequence is Phosphate import ATP-binding protein PstB (273 aa).

A disordered region spans residues methionine 1–aspartate 20. An ABC transporter domain is found at valine 27–isoleucine 268. Residue glycine 59–serine 66 coordinates ATP.

Belongs to the ABC transporter superfamily. Phosphate importer (TC 3.A.1.7) family. The complex is composed of two ATP-binding proteins (PstB), two transmembrane proteins (PstC and PstA) and a solute-binding protein (PstS).

The protein localises to the cell inner membrane. It catalyses the reaction phosphate(out) + ATP + H2O = ADP + 2 phosphate(in) + H(+). Functionally, part of the ABC transporter complex PstSACB involved in phosphate import. Responsible for energy coupling to the transport system. The protein is Phosphate import ATP-binding protein PstB of Nitrobacter winogradskyi (strain ATCC 25391 / DSM 10237 / CIP 104748 / NCIMB 11846 / Nb-255).